A 493-amino-acid chain; its full sequence is Glutamate--tRNA ligase (493 aa).

The 'HIGH' region signature appears at 10 to 20 (PSPTGTPHVGL). The 'KMSKS' region motif lies at 254-258 (KLSKR). K257 provides a ligand contact to ATP.

This sequence belongs to the class-I aminoacyl-tRNA synthetase family. Glutamate--tRNA ligase type 1 subfamily. As to quaternary structure, monomer.

The protein resides in the cytoplasm. The catalysed reaction is tRNA(Glu) + L-glutamate + ATP = L-glutamyl-tRNA(Glu) + AMP + diphosphate. Functionally, catalyzes the attachment of glutamate to tRNA(Glu) in a two-step reaction: glutamate is first activated by ATP to form Glu-AMP and then transferred to the acceptor end of tRNA(Glu). This is Glutamate--tRNA ligase from Corynebacterium glutamicum (strain ATCC 13032 / DSM 20300 / JCM 1318 / BCRC 11384 / CCUG 27702 / LMG 3730 / NBRC 12168 / NCIMB 10025 / NRRL B-2784 / 534).